The primary structure comprises 599 residues: Proline--tRNA ligase (599 aa).

This sequence belongs to the class-II aminoacyl-tRNA synthetase family. ProS type 1 subfamily. In terms of assembly, homodimer.

The protein localises to the cytoplasm. The catalysed reaction is tRNA(Pro) + L-proline + ATP = L-prolyl-tRNA(Pro) + AMP + diphosphate. In terms of biological role, catalyzes the attachment of proline to tRNA(Pro) in a two-step reaction: proline is first activated by ATP to form Pro-AMP and then transferred to the acceptor end of tRNA(Pro). As ProRS can inadvertently accommodate and process non-cognate amino acids such as alanine and cysteine, to avoid such errors it has two additional distinct editing activities against alanine. One activity is designated as 'pretransfer' editing and involves the tRNA(Pro)-independent hydrolysis of activated Ala-AMP. The other activity is designated 'posttransfer' editing and involves deacylation of mischarged Ala-tRNA(Pro). The misacylated Cys-tRNA(Pro) is not edited by ProRS. The sequence is that of Proline--tRNA ligase from Prochlorococcus marinus (strain MIT 9313).